We begin with the raw amino-acid sequence, 982 residues long: Probable beta-galactosidase C (982 aa).

The N-terminal stretch at 1–21 (MRLFALLPVLLGLISSHFVSA) is a signal peptide. Residues tyrosine 80, asparagine 125, alanine 126, glutamate 127, and asparagine 185 each contribute to the substrate site. Glutamate 186 functions as the Proton donor in the catalytic mechanism. Position 249 (tyrosine 249) interacts with substrate. An intrachain disulfide couples cysteine 255 to cysteine 302. Asparagine 274 carries an N-linked (GlcNAc...) asparagine glycan. Catalysis depends on glutamate 285, which acts as the Nucleophile. Tyrosine 351 contributes to the substrate binding site. N-linked (GlcNAc...) asparagine glycosylation is found at asparagine 389, asparagine 434, asparagine 600, asparagine 675, asparagine 718, and asparagine 785.

The protein belongs to the glycosyl hydrolase 35 family.

It is found in the secreted. The enzyme catalyses Hydrolysis of terminal non-reducing beta-D-galactose residues in beta-D-galactosides.. Cleaves beta-linked terminal galactosyl residues from gangliosides, glycoproteins, and glycosaminoglycans. The chain is Probable beta-galactosidase C (lacC) from Penicillium rubens (strain ATCC 28089 / DSM 1075 / NRRL 1951 / Wisconsin 54-1255) (Penicillium chrysogenum).